Reading from the N-terminus, the 166-residue chain is uncharacterized protein (166 aa).

Composition is skewed to gly residues over residues methionine 1 to glutamine 10 and tyrosine 76 to asparagine 86. Residues methionine 1–isoleucine 117 form a disordered region.

This is an uncharacterized protein from Caenorhabditis elegans.